The chain runs to 323 residues: Glyoxylate/hydroxypyruvate reductase HPR3 (323 aa).

NADP(+) is bound by residues 160–163 (LGSI), 182–184 (SRS), and 238–240 (VGR). Catalysis depends on residues arginine 240 and glutamate 269. Histidine 287 serves as the catalytic Proton donor. 287 to 289 (HFA) serves as a coordination point for NADP(+).

Belongs to the D-isomer specific 2-hydroxyacid dehydrogenase family. GyaR subfamily. In terms of assembly, homodimer.

It carries out the reaction glycolate + NADP(+) = glyoxylate + NADPH + H(+). The catalysed reaction is (R)-glycerate + NADP(+) = 3-hydroxypyruvate + NADPH + H(+). Its activity is regulated as follows. Inhibited by oxalate. In terms of biological role, catalyzes the NADPH-dependent reduction of glyoxylate and hydroxypyruvate (HP) into glycolate and glycerate. Mostly active in the presence of NADPH and glyoxylate. The sequence is that of Glyoxylate/hydroxypyruvate reductase HPR3 (HPR3) from Arabidopsis thaliana (Mouse-ear cress).